A 128-amino-acid polypeptide reads, in one-letter code: Protein C10 (128 aa).

It belongs to the UPF0456 family.

The protein resides in the cytoplasm. This chain is Protein C10, found in Xenopus laevis (African clawed frog).